We begin with the raw amino-acid sequence, 59 residues long: Protein translocase subunit SecE (59 aa).

Residues 33–53 traverse the membrane as a helical segment; the sequence is GAGIALVGLLGFIIFAVMTFV.

The protein belongs to the SecE/SEC61-gamma family. Component of the Sec protein translocase complex. Heterotrimer consisting of SecY (alpha), SecG (beta) and SecE (gamma) subunits. The heterotrimers can form oligomers, although 1 heterotrimer is thought to be able to translocate proteins. Interacts with the ribosome. May interact with SecDF, and other proteins may be involved.

The protein resides in the cell membrane. Functionally, essential subunit of the Sec protein translocation channel SecYEG. Clamps together the 2 halves of SecY. May contact the channel plug during translocation. The protein is Protein translocase subunit SecE of Haloarcula marismortui (strain ATCC 43049 / DSM 3752 / JCM 8966 / VKM B-1809) (Halobacterium marismortui).